Reading from the N-terminus, the 339-residue chain is Ketol-acid reductoisomerase (NADP(+)) (339 aa).

Residues 1-182 (MRVYYDRDAD…GGGRSGIIET (182 aa)) form the KARI N-terminal Rossmann domain. Residues 24-27 (YGSQ), Lys48, Ser51, Thr53, and 83-86 (DELQ) contribute to the NADP(+) site. His108 is an active-site residue. Gly134 is a binding site for NADP(+). The KARI C-terminal knotted domain maps to 183-328 (TFQEECETDL…AKLRGMMPWI (146 aa)). Residues Asp191, Glu195, Glu227, and Glu231 each contribute to the Mg(2+) site. Substrate is bound at residue Ser252.

The protein belongs to the ketol-acid reductoisomerase family. The cofactor is Mg(2+).

It carries out the reaction (2R)-2,3-dihydroxy-3-methylbutanoate + NADP(+) = (2S)-2-acetolactate + NADPH + H(+). The catalysed reaction is (2R,3R)-2,3-dihydroxy-3-methylpentanoate + NADP(+) = (S)-2-ethyl-2-hydroxy-3-oxobutanoate + NADPH + H(+). Its pathway is amino-acid biosynthesis; L-isoleucine biosynthesis; L-isoleucine from 2-oxobutanoate: step 2/4. It participates in amino-acid biosynthesis; L-valine biosynthesis; L-valine from pyruvate: step 2/4. In terms of biological role, involved in the biosynthesis of branched-chain amino acids (BCAA). Catalyzes an alkyl-migration followed by a ketol-acid reduction of (S)-2-acetolactate (S2AL) to yield (R)-2,3-dihydroxy-isovalerate. In the isomerase reaction, S2AL is rearranged via a Mg-dependent methyl migration to produce 3-hydroxy-3-methyl-2-ketobutyrate (HMKB). In the reductase reaction, this 2-ketoacid undergoes a metal-dependent reduction by NADPH to yield (R)-2,3-dihydroxy-isovalerate. This is Ketol-acid reductoisomerase (NADP(+)) from Allorhizobium ampelinum (strain ATCC BAA-846 / DSM 112012 / S4) (Agrobacterium vitis (strain S4)).